A 227-amino-acid polypeptide reads, in one-letter code: Phosphoribosylformylglycinamidine synthase subunit PurQ (227 aa).

A Glutamine amidotransferase type-1 domain is found at 3–227; it reads FAVCVFPGSN…LMLWYSLLSD (225 aa). Catalysis depends on Cys-86, which acts as the Nucleophile. Catalysis depends on residues His-203 and Glu-205.

Part of the FGAM synthase complex composed of 1 PurL, 1 PurQ and 2 PurS subunits.

It is found in the cytoplasm. It carries out the reaction N(2)-formyl-N(1)-(5-phospho-beta-D-ribosyl)glycinamide + L-glutamine + ATP + H2O = 2-formamido-N(1)-(5-O-phospho-beta-D-ribosyl)acetamidine + L-glutamate + ADP + phosphate + H(+). It catalyses the reaction L-glutamine + H2O = L-glutamate + NH4(+). Its pathway is purine metabolism; IMP biosynthesis via de novo pathway; 5-amino-1-(5-phospho-D-ribosyl)imidazole from N(2)-formyl-N(1)-(5-phospho-D-ribosyl)glycinamide: step 1/2. Functionally, part of the phosphoribosylformylglycinamidine synthase complex involved in the purines biosynthetic pathway. Catalyzes the ATP-dependent conversion of formylglycinamide ribonucleotide (FGAR) and glutamine to yield formylglycinamidine ribonucleotide (FGAM) and glutamate. The FGAM synthase complex is composed of three subunits. PurQ produces an ammonia molecule by converting glutamine to glutamate. PurL transfers the ammonia molecule to FGAR to form FGAM in an ATP-dependent manner. PurS interacts with PurQ and PurL and is thought to assist in the transfer of the ammonia molecule from PurQ to PurL. The sequence is that of Phosphoribosylformylglycinamidine synthase subunit PurQ from Aquifex aeolicus (strain VF5).